The chain runs to 497 residues: Endoglucanase 17 (497 aa).

An N-terminal signal peptide occupies residues 1–21 (MAAAGGAVLLLVLATATSVTG). Aspartate 77 (nucleophile) is an active-site residue. Residue histidine 406 is part of the active site. N-linked (GlcNAc...) asparagine glycosylation is present at asparagine 451. Active-site residues include aspartate 458 and glutamate 467.

This sequence belongs to the glycosyl hydrolase 9 (cellulase E) family.

It localises to the secreted. It carries out the reaction Endohydrolysis of (1-&gt;4)-beta-D-glucosidic linkages in cellulose, lichenin and cereal beta-D-glucans.. This chain is Endoglucanase 17 (GLU13), found in Oryza sativa subsp. japonica (Rice).